The chain runs to 637 residues: Coiled-coil domain-containing protein 22 homolog (637 aa).

Coiled-coil stretches lie at residues 322–489 and 608–637; these read ETEI…YKQA and SDRVVQDLKNIKSENQSLIKQIKTLIETKN.

The protein belongs to the CCDC22 family.

The sequence is that of Coiled-coil domain-containing protein 22 homolog from Dictyostelium discoideum (Social amoeba).